Reading from the N-terminus, the 294-residue chain is Putative deoxyribonuclease TATDN3 (294 aa).

Positions 9, 11, 104, 144, 167, and 215 each coordinate Zn(2+).

The protein belongs to the metallo-dependent hydrolases superfamily. TatD-type hydrolase family. It depends on Mn(2+) as a cofactor. The cofactor is Ca(2+). Mg(2+) is required as a cofactor. Zn(2+) serves as cofactor.

The protein resides in the nucleus. The 3'-exonuclease activity is sensitive to the metal ion present in the active site, whereas the AP endodeoxyribonuclease activity is observed in a variety of divalent metal cofactors. 3'-exoxonuclease activity is suppressed in the presence of Ca(2+), Zn(2+) and Ni(2+). Functionally, exhibits 3'-exonuclease activities and apurinic/apyrimidinic (AP) endonuclease (in vitro). Show preferential AP endonuclease activity on double-stranded DNA substrates and 3'- exonuclease activity on single-stranded DNA. This is Putative deoxyribonuclease TATDN3 (Tatdn3) from Mus musculus (Mouse).